We begin with the raw amino-acid sequence, 376 residues long: E3 ubiquitin-protein ligase RNF133 (376 aa).

Residues 65-167 (SSTLKRVAGV…LKGTEIFHLI (103 aa)) enclose the PA domain. Residues 190–210 (YLVSFVIVTTATLAYFIFYHI) form a helical membrane-spanning segment. The segment at 256–297 (CVICFEHYKPNDIVRILTCKHFFHKNCIDPWILSHGTCPICK) adopts an RING-type; atypical zinc-finger fold. The tract at residues 328-376 (TLSPSEEETNNEVSPAGTSDKVIHVEENPTSQNNDSQPHSVVEDVHPSP) is disordered. Positions 355-366 (NPTSQNNDSQPH) are enriched in polar residues.

As to quaternary structure, interacts with E3 ligase UBE2J1. Post-translationally, auto-ubiquitinated.

Its subcellular location is the endoplasmic reticulum membrane. It carries out the reaction S-ubiquitinyl-[E2 ubiquitin-conjugating enzyme]-L-cysteine + [acceptor protein]-L-lysine = [E2 ubiquitin-conjugating enzyme]-L-cysteine + N(6)-ubiquitinyl-[acceptor protein]-L-lysine.. The protein operates within protein modification; protein ubiquitination. Its function is as follows. Has E3 ubiquitin-protein ligase activity. Plays a role in male fecundity through the interaction with the E2 ubituitin-protein ligase UBE2J1. The sequence is that of E3 ubiquitin-protein ligase RNF133 (RNF133) from Macaca fascicularis (Crab-eating macaque).